The primary structure comprises 40 residues: uncharacterized protein (40 aa).

This is an uncharacterized protein from Sulfolobus acidocaldarius (strain ATCC 33909 / DSM 639 / JCM 8929 / NBRC 15157 / NCIMB 11770).